The following is a 223-amino-acid chain: Ubiquitin carboxyl-terminal hydrolase isozyme L1 (223 aa).

The residue at position 1 (methionine 1) is an N-acetylmethionine. Residues 2-221 form the UCH catalytic domain; that stretch reads QLKPMEINPE…VRFSAVALCK (220 aa). The segment at 5–10 is interaction with ubiquitin; sequence PMEINP. The active-site Nucleophile is cysteine 90. Position 125 is a phosphoserine (serine 125). Histidine 161 (proton donor) is an active-site residue. Positions 211–216 are interaction with ubiquitin; sequence EVRFSA. Cysteine 220 carries S-farnesyl cysteine lipidation. The propeptide at 221 to 223 is removed in mature form; that stretch reads KAA.

It belongs to the peptidase C12 family. As to quaternary structure, monomer. Homodimer. Interacts with COPS5 and SNCA. Post-translationally, O-glycosylated. In terms of tissue distribution, expressed in the placenta at all stages of pregnancy. Expression increases as pregnancy progresses.

Its subcellular location is the cytoplasm. It localises to the endoplasmic reticulum membrane. The protein resides in the nucleus. The catalysed reaction is Thiol-dependent hydrolysis of ester, thioester, amide, peptide and isopeptide bonds formed by the C-terminal Gly of ubiquitin (a 76-residue protein attached to proteins as an intracellular targeting signal).. Functionally, ubiquitin-protein hydrolase involved both in the processing of ubiquitin precursors and of ubiquitinated proteins. This enzyme is a thiol protease that recognizes and hydrolyzes a peptide bond at the C-terminal glycine of ubiquitin. Also binds to free monoubiquitin and may prevent its degradation in lysosomes. The homodimer may have ATP-independent ubiquitin ligase activity. In Macaca fascicularis (Crab-eating macaque), this protein is Ubiquitin carboxyl-terminal hydrolase isozyme L1 (UCHL1).